Reading from the N-terminus, the 502-residue chain is NAD(P)H-quinone oxidoreductase subunit 2, chloroplastic (502 aa).

14 consecutive transmembrane segments (helical) span residues 15–35 (VLPE…DLIF), 42–62 (VLPY…LFQW), 79–99 (LSIA…LLSI), 108–128 (TLSE…LLCG), 132–152 (ILMI…LTGY), 167–187 (LLIG…LYGL), 210–230 (LASL…IAAA), 253–275 (VSSK…PYII), 278–298 (WHNI…IIAI), 307–327 (LGYS…AGNI), 334–354 (LVYM…VILF), 375–395 (ILAL…PFGG), 413–433 (LLVF…IKII), and 468–488 (ILIC…IISI).

The protein belongs to the complex I subunit 2 family. In terms of assembly, NDH is composed of at least 16 different subunits, 5 of which are encoded in the nucleus.

The protein resides in the plastid. The protein localises to the chloroplast thylakoid membrane. The catalysed reaction is a plastoquinone + NADH + (n+1) H(+)(in) = a plastoquinol + NAD(+) + n H(+)(out). It carries out the reaction a plastoquinone + NADPH + (n+1) H(+)(in) = a plastoquinol + NADP(+) + n H(+)(out). NDH shuttles electrons from NAD(P)H:plastoquinone, via FMN and iron-sulfur (Fe-S) centers, to quinones in the photosynthetic chain and possibly in a chloroplast respiratory chain. The immediate electron acceptor for the enzyme in this species is believed to be plastoquinone. Couples the redox reaction to proton translocation, and thus conserves the redox energy in a proton gradient. The chain is NAD(P)H-quinone oxidoreductase subunit 2, chloroplastic from Mesostigma viride (Green alga).